The chain runs to 262 residues: Hydroxyethylthiazole kinase (262 aa).

Residue Met-50 participates in substrate binding. 2 residues coordinate ATP: Arg-125 and Thr-171. Gly-198 contributes to the substrate binding site.

It belongs to the Thz kinase family. Mg(2+) is required as a cofactor.

The catalysed reaction is 5-(2-hydroxyethyl)-4-methylthiazole + ATP = 4-methyl-5-(2-phosphooxyethyl)-thiazole + ADP + H(+). The protein operates within cofactor biosynthesis; thiamine diphosphate biosynthesis; 4-methyl-5-(2-phosphoethyl)-thiazole from 5-(2-hydroxyethyl)-4-methylthiazole: step 1/1. Its function is as follows. Catalyzes the phosphorylation of the hydroxyl group of 4-methyl-5-beta-hydroxyethylthiazole (THZ). The sequence is that of Hydroxyethylthiazole kinase from Escherichia coli O157:H7.